Consider the following 184-residue polypeptide: Photosystem I assembly protein Ycf4 (184 aa).

Transmembrane regions (helical) follow at residues 22-42 and 57-77; these read FCWA…GTSS and IIFF…LFIS.

This sequence belongs to the Ycf4 family.

It is found in the plastid. It localises to the chloroplast thylakoid membrane. In terms of biological role, seems to be required for the assembly of the photosystem I complex. The protein is Photosystem I assembly protein Ycf4 of Olimarabidopsis pumila (Dwarf rocket).